Consider the following 193-residue polypeptide: Deoxycytidylate deaminase (193 aa).

The CMP/dCMP-type deaminase domain maps to 1 to 171; sequence MKASTVLQIA…DILRNAGIEV (171 aa). 5 residues coordinate Zn(2+): C19, C49, H94, E102, and H104. Catalysis depends on E106, which acts as the Proton donor. Zn(2+) is bound by residues C132 and C135. Y153 is a substrate binding site.

Belongs to the cytidine and deoxycytidylate deaminase family. Homohexamer. It depends on Zn(2+) as a cofactor.

The enzyme catalyses dCMP + H2O + H(+) = dUMP + NH4(+). Its activity is regulated as follows. Allosteric enzyme whose activity is greatly influenced by the end products of its metabolic pathway, dCTP and dTTP. In terms of biological role, supplies the nucleotide substrate for thymidylate synthetase. This is Deoxycytidylate deaminase (CD) from Escherichia coli (Bacteriophage T4).